The chain runs to 311 residues: Olfactory receptor 52J3 (311 aa).

Over 1–27 the chain is Extracellular; that stretch reads MFYHNKSIFHPVTFFLIGIPGLEDFHM. A glycan (N-linked (GlcNAc...) asparagine) is linked at Asn-5. The helical transmembrane segment at 28–48 threads the bilayer; that stretch reads WISGPFCSVYLVALLGNATIL. At 49–56 the chain is on the cytoplasmic side; sequence LVIKVEQT. Residues 57 to 77 form a helical membrane-spanning segment; sequence LREPMFYFLAILSTIDLALST. Topologically, residues 78–101 are extracellular; that stretch reads TSVPRMLGIFWFDAHEINYGACVA. An intrachain disulfide couples Cys-99 to Cys-191. A helical transmembrane segment spans residues 102–122; it reads QMFLIHAFTGMEAEVLLAMAF. The Cytoplasmic segment spans residues 123–141; the sequence is DRYVAVCAPLHYATILTSQ. Residues 142–162 form a helical membrane-spanning segment; the sequence is VLVGISMCIVIRPVLLTLPMV. The Extracellular segment spans residues 163-198; it reads YLIYRLPFCQAHIIAHSYCEHMGIAKLSCGNIRING. A helical membrane pass occupies residues 199–218; that stretch reads IYGLFVVSFFVLNLVLIGIS. Residues 219-238 are Cytoplasmic-facing; it reads YVYILRAVFRLPSHDAQLKA. The chain crosses the membrane as a helical span at residues 239–259; the sequence is LSTCGAHVGVICVFYIPSVFS. At 260-274 the chain is on the extracellular side; the sequence is FLTHRFGHQIPGYIH. A helical transmembrane segment spans residues 275-295; sequence ILVANLYLIIPPSLNPIIYGV. At 296–311 the chain is on the cytoplasmic side; the sequence is RTKQIRERVLYVFTKK.

Belongs to the G-protein coupled receptor 1 family.

The protein localises to the cell membrane. In terms of biological role, odorant receptor. The sequence is that of Olfactory receptor 52J3 (OR52J3) from Homo sapiens (Human).